Here is a 336-residue protein sequence, read N- to C-terminus: Glyceraldehyde-3-phosphate dehydrogenase (336 aa).

NAD(+) contacts are provided by residues 12 to 13, D34, and S120; that span reads RI. Residues 150–152, T181, R198, 211–212, and R234 contribute to the D-glyceraldehyde 3-phosphate site; these read SCT and TG. C151 serves as the catalytic Nucleophile. N316 provides a ligand contact to NAD(+).

This sequence belongs to the glyceraldehyde-3-phosphate dehydrogenase family. As to quaternary structure, homotetramer.

Its subcellular location is the cytoplasm. The enzyme catalyses D-glyceraldehyde 3-phosphate + phosphate + NAD(+) = (2R)-3-phospho-glyceroyl phosphate + NADH + H(+). The protein operates within carbohydrate degradation; glycolysis; pyruvate from D-glyceraldehyde 3-phosphate: step 1/5. Catalyzes the oxidative phosphorylation of glyceraldehyde 3-phosphate (G3P) to 1,3-bisphosphoglycerate (BPG) using the cofactor NAD. The first reaction step involves the formation of a hemiacetal intermediate between G3P and a cysteine residue, and this hemiacetal intermediate is then oxidized to a thioester, with concomitant reduction of NAD to NADH. The reduced NADH is then exchanged with the second NAD, and the thioester is attacked by a nucleophilic inorganic phosphate to produce BPG. The sequence is that of Glyceraldehyde-3-phosphate dehydrogenase (gapA) from Staphylococcus aureus.